Reading from the N-terminus, the 465-residue chain is MENQCLPKKVPGFCSFRYGLAILLHFCNIAIMAQRVCLNLTMVAMVNNTGSPHLSNESVVEMLDNVKNPVYSWSPDIQGLILSSVFFGMVVVQAPVGYLSGIYPMKRIIGSSLFLSSLMSLLLPPAAQVGAALVIVCRVLQGIAQGTVSTGQHEIWVKWAPPLERGRLTSMTLSGFVMGPFIVLLVSGFICDLLGWPMVFYIFGIVGCVLSLSWFFLFFDDPKDHPYMSSSEKDYIISSLMQQASSGRQSLPIKAMLKSLPLWAIILNSFAFIWSNSLLVTYTPTFISTVLHVNVRENGLLSSLPYLLAYICGILAGQMSDFFLTRKIFSIVTVRKLFTTLGSFCPVIFIMCLLYLSYNFYSTVIFLTLANSTLSFSYCGQLINALDIAPRYYGFLKAVTALIGMFGGLISSTLAGLILNQDPEYAWHKIFFLMAGINVTCLVFYFLFAKGEIQDWAKEIKTTRL.

N-linked (GlcNAc...) asparagine glycans are attached at residues N39, N47, and N56. A run of 10 helical transmembrane segments spans residues 79–99 (GLIL…VGYL), 117–137 (SLMS…VIVC), 176–196 (FVMG…LLGW), 199–219 (VFYI…FLFF), 260–280 (LPLW…SLLV), 304–324 (LPYL…DFFL), 337–356 (LFTT…LLYL), 363–383 (TVIF…GQLI), 399–419 (VTAL…GLIL), and 429–449 (KIFF…FLFA).

The protein belongs to the major facilitator superfamily. Sodium/anion cotransporter family. In terms of assembly, interacts with PDZK1. As to expression, kidney.

The protein resides in the apical cell membrane. It catalyses the reaction 3 Na(+)(out) + phosphate(out) = 3 Na(+)(in) + phosphate(in). It carries out the reaction urate(out) = urate(in). In terms of biological role, important for the resorption of phosphate by the kidney. May be involved in actively transporting phosphate into cells via Na(+) cotransport in the renal brush border membrane. Plays a role in urate transport in the kidney. The protein is Sodium-dependent phosphate transport protein 1 (Slc17a1) of Mus musculus (Mouse).